We begin with the raw amino-acid sequence, 331 residues long: Ferredoxin--NADP reductase 2 (331 aa).

7 residues coordinate FAD: Glu-37, Gln-45, Tyr-50, Val-90, Phe-124, Asp-286, and Thr-327.

This sequence belongs to the ferredoxin--NADP reductase type 2 family. In terms of assembly, homodimer. FAD serves as cofactor.

It carries out the reaction 2 reduced [2Fe-2S]-[ferredoxin] + NADP(+) + H(+) = 2 oxidized [2Fe-2S]-[ferredoxin] + NADPH. This Listeria innocua serovar 6a (strain ATCC BAA-680 / CLIP 11262) protein is Ferredoxin--NADP reductase 2.